A 793-amino-acid chain; its full sequence is Protein translocase subunit SecA 2 (793 aa).

Residues glutamine 77, 95–99 (GEGKT), and aspartate 493 each bind ATP.

This sequence belongs to the SecA family. Monomer and homodimer (Potential). Part of the accessory SecA2/SecY2 protein translocation apparatus required to export cell wall protein GspB.

The protein localises to the cell membrane. The protein resides in the cytoplasm. The catalysed reaction is ATP + H2O + cellular proteinSide 1 = ADP + phosphate + cellular proteinSide 2.. Its function is as follows. Part of the accessory SecA2/SecY2 system specifically required to export GspB, a serine-rich repeat cell wall protein encoded upstream in the same operon. In Streptococcus gordonii, this protein is Protein translocase subunit SecA 2.